Consider the following 615-residue polypeptide: (+)-alpha-pinene synthase TPS2, chloroplastic (615 aa).

The transit peptide at 1–55 (MHCMAVRHFAPSSSLSIFSSTNINNHFFGREIFTPKTSNITTKKSRSRPNCNPIQ) directs the protein to the chloroplast. Arg330, Asp367, Asp371, Arg509, and Asp512 together coordinate (2E)-geranyl diphosphate. Asp367 and Asp371 together coordinate Mg(2+). The DDXXD motif motif lies at 367–371 (DDIYD). Mg(2+) is bound by residues Asp512, Thr516, and Glu520.

The protein belongs to the terpene synthase family. Tpsb subfamily. The cofactor is Mg(2+). It depends on Mn(2+) as a cofactor. Requires K(+) as cofactor. Trichome.

It localises to the plastid. Its subcellular location is the chloroplast. It carries out the reaction (2E)-geranyl diphosphate = (1R,5R)-alpha-pinene + diphosphate. The enzyme catalyses (2E)-geranyl diphosphate = (1R,5R)-beta-pinene + diphosphate. It catalyses the reaction (2E)-geranyl diphosphate = (4S)-limonene + diphosphate. The catalysed reaction is (2E)-geranyl diphosphate = beta-myrcene + diphosphate. It functions in the pathway secondary metabolite biosynthesis; terpenoid biosynthesis. Its pathway is terpene metabolism; (-)-alpha-pinene biosynthesis; (-)-alpha-pinene from geranyl diphosphate: step 1/1. Involved in monoterpene (C10) olefins biosynthesis, constituants of cannabinoids and terpenoids-rich resins. Catalyzes mainly the conversion of (2E)-geranyl diphosphate to (+)-alpha-pinene, and also produces minor products such as (-)-limonene, (+)-beta-pinene and beta-myrcene. The chain is (+)-alpha-pinene synthase TPS2, chloroplastic from Cannabis sativa (Hemp).